The chain runs to 433 residues: Serine/threonine-protein kinase toxin HipA (433 aa).

A Phosphoserine; by autocatalysis modification is found at serine 147. Residues 151–154, lysine 178, and 220–222 each bind ATP; these read VQPK and ERF. Aspartate 306 (proton acceptor) is an active-site residue. ATP contacts are provided by residues 308–311 and 327–328; these read HGKN and YD. 2 consecutive DNA-binding regions follow at residues 380–384 and arginine 429; that span reads RIARR.

It belongs to the HipA Ser/Thr kinase family. As to quaternary structure, monomer. Forms a HipA(2)HipB(2)-DNA complex with cognate antitoxin HipB; has higher affinity for the latter when HipB is prebound to DNA and HipA is phosphorylated. Binds DNA in the ternary complex.

The enzyme catalyses L-seryl-[protein] + ATP = O-phospho-L-seryl-[protein] + ADP + H(+). It catalyses the reaction L-threonyl-[protein] + ATP = O-phospho-L-threonyl-[protein] + ADP + H(+). Toxic component of a type II toxin-antitoxin (TA) system; overexpression in wild-type temporarily inhibits cell growth, overexpression in a hipAB deletion leads to acute growth inhibition. The toxic effect of HipA is neutralized by its cognate antitoxin HipB. In the ternary phosphoserine-HipA-HipB-DNA complex the DNA is bent about 125 degrees; all HipA in the crystallized ternary complex is phosphorylated. In E.coli phosphorylation of HipA is thought to release HipB from the HipA-HipB-DNA complex, suggesting the complex functions differently in the 2 bacteria. Phosphorylates Glu-tRNA-ligase (GltX, on 'Ser-239') in vivo, with HipB probably acts as a corepressor for transcription of the hipBA promoter. This is Serine/threonine-protein kinase toxin HipA from Shewanella oneidensis (strain ATCC 700550 / JCM 31522 / CIP 106686 / LMG 19005 / NCIMB 14063 / MR-1).